The chain runs to 303 residues: MWFRSLAVSACTVGVLGALSQKFAPTALFHSAIRKSSLVEQSDMKVELLPALTDNYMYLLIDEETKEAAIVDPVEPQKVVDAVKKHGVKLKTVLTTHHHWDHAGGNEKLVKLMPGLTVYGGDDRVGALTQKVTHYNTFKVGSLNVKCLFTPCHTSGHICYFVTKENSTEAPAVFTGDTLFVAGCGKFFEGTADEMYKALIEVLGRLPPETRVYCGHEYTINNLKFARHVEPNNEVIRTKLAWAKEKYDNGEPTIPSTVAEEFTFNPFMRVREKSVLEHAGTSDPIEAMRSIRKEKDGFRVPKN.

Residues His97, His99, Asp101, His102, His153, and Asp177 each coordinate Zn(2+). Substrate-binding positions include 186-188, 216-218, and 292-295; these read KFF, HEY, and RKEK. A Zn(2+)-binding site is contributed by His216.

Belongs to the metallo-beta-lactamase superfamily. Glyoxalase II family. In terms of assembly, monomer. Zn(2+) serves as cofactor.

It localises to the mitochondrion matrix. Its subcellular location is the cytoplasm. The catalysed reaction is an S-(2-hydroxyacyl)glutathione + H2O = a 2-hydroxy carboxylate + glutathione + H(+). It carries out the reaction (R)-S-lactoylglutathione + H2O = (R)-lactate + glutathione + H(+). In terms of biological role, thiolesterase that catalyzes the hydrolysis of S-D-lactoyl-glutathione to form glutathione and D-lactic acid. In Danio rerio (Zebrafish), this protein is Hydroxyacylglutathione hydrolase, mitochondrial (hagh).